The chain runs to 106 residues: Putative double-stranded DNA mimic protein VV1_3059 (106 aa).

This sequence belongs to the putative dsDNA mimic protein family.

Its function is as follows. May act as a double-stranded DNA (dsDNA) mimic. Probably regulates the activity of a dsDNA-binding protein. This chain is Putative double-stranded DNA mimic protein VV1_3059, found in Vibrio vulnificus (strain CMCP6).